Consider the following 61-residue polypeptide: Small ribosomal subunit protein uS14 (61 aa).

Zn(2+) contacts are provided by Cys24, Cys27, Cys40, and Cys43.

The protein belongs to the universal ribosomal protein uS14 family. Zinc-binding uS14 subfamily. As to quaternary structure, part of the 30S ribosomal subunit. Contacts proteins S3 and S10. It depends on Zn(2+) as a cofactor.

Functionally, binds 16S rRNA, required for the assembly of 30S particles and may also be responsible for determining the conformation of the 16S rRNA at the A site. This Mycoplasmoides gallisepticum (strain R(low / passage 15 / clone 2)) (Mycoplasma gallisepticum) protein is Small ribosomal subunit protein uS14.